A 345-amino-acid chain; its full sequence is Anthranilate phosphoribosyltransferase (345 aa).

5-phospho-alpha-D-ribose 1-diphosphate is bound by residues Gly-88, 91-92 (GD), Thr-96, 98-101 (NIST), 116-124 (KHGNRSASG), and Ser-128. Gly-88 is a binding site for anthranilate. Ser-100 is a Mg(2+) binding site. Asn-119 is an anthranilate binding site. Arg-174 is a binding site for anthranilate. Mg(2+) is bound by residues Asp-233 and Glu-234.

The protein belongs to the anthranilate phosphoribosyltransferase family. As to quaternary structure, homodimer. It depends on Mg(2+) as a cofactor.

It carries out the reaction N-(5-phospho-beta-D-ribosyl)anthranilate + diphosphate = 5-phospho-alpha-D-ribose 1-diphosphate + anthranilate. The protein operates within amino-acid biosynthesis; L-tryptophan biosynthesis; L-tryptophan from chorismate: step 2/5. Functionally, catalyzes the transfer of the phosphoribosyl group of 5-phosphorylribose-1-pyrophosphate (PRPP) to anthranilate to yield N-(5'-phosphoribosyl)-anthranilate (PRA). The chain is Anthranilate phosphoribosyltransferase from Prochlorococcus marinus (strain NATL1A).